A 497-amino-acid chain; its full sequence is Probable FAD-binding monooxygenase AlmA (497 aa).

A helical transmembrane segment spans residues 4–24; the sequence is QVDVLIIGAGISGIGLAVHLS. FAD is bound by residues Ser15, Glu36, Asp56, Phe62, and Val104. Residue 54–56 coordinates NADP(+); sequence RSD. Residues 184–190, 208–209, and 292–293 each bind NADP(+); these read SGATAIT, RS, and RL. Val395 is an FAD binding site.

It belongs to the FAD-binding monooxygenase family. Requires FAD as cofactor.

It is found in the cell membrane. Its pathway is hydrocarbon metabolism; alkane degradation. Is involved in the degradation of n-alkanes with C chain lengths of 32 and longer. Allows Acinetobacter sp. strain DSM 17874 to grow on long-chain n-alkanes such as dotriacontane (C32H66) or hexatriacontane (C36H74) as a sole carbon source. This chain is Probable FAD-binding monooxygenase AlmA, found in Acinetobacter sp.